A 326-amino-acid polypeptide reads, in one-letter code: Peroxidase 39 (326 aa).

Residues 1 to 23 (MTRFGLALLMILVIQGLVTFSEA) form the signal peptide. 4 disulfides stabilise this stretch: cysteine 34-cysteine 114, cysteine 67-cysteine 72, cysteine 120-cysteine 322, and cysteine 199-cysteine 232. The active-site Proton acceptor is the histidine 65. Residues aspartate 66, valine 69, glycine 71, aspartate 73, and serine 75 each coordinate Ca(2+). N-linked (GlcNAc...) asparagine glycosylation is present at asparagine 79. Residue proline 162 coordinates substrate. Asparagine 167 carries an N-linked (GlcNAc...) asparagine glycan. Histidine 192 contacts heme b. Threonine 193 provides a ligand contact to Ca(2+). N-linked (GlcNAc...) asparagine glycosylation is found at asparagine 208 and asparagine 238. The Ca(2+) site is built by aspartate 245, serine 248, and aspartate 253.

The protein belongs to the peroxidase family. Classical plant (class III) peroxidase subfamily. Requires heme b as cofactor. It depends on Ca(2+) as a cofactor. As to expression, slightly expressed in roots.

The protein localises to the secreted. The catalysed reaction is 2 a phenolic donor + H2O2 = 2 a phenolic radical donor + 2 H2O. In terms of biological role, removal of H(2)O(2), oxidation of toxic reductants, biosynthesis and degradation of lignin, suberization, auxin catabolism, response to environmental stresses such as wounding, pathogen attack and oxidative stress. These functions might be dependent on each isozyme/isoform in each plant tissue. This Arabidopsis thaliana (Mouse-ear cress) protein is Peroxidase 39 (PER39).